A 278-amino-acid chain; its full sequence is S-adenosylmethionine decarboxylase proenzyme (278 aa).

Residues 96–115 (LTPESLTGESPGPLPGNKPS) form a disordered region. Residue S126 is the Schiff-base intermediate with substrate; via pyruvic acid of the active site. Pyruvic acid (Ser); by autocatalysis is present on S126. The active-site Proton acceptor; for processing activity is H131. C154 serves as the catalytic Proton donor; for catalytic activity.

This sequence belongs to the prokaryotic AdoMetDC family. Type 2 subfamily. As to quaternary structure, heterooctamer of four alpha and four beta chains arranged as a tetramer of alpha/beta heterodimers. The cofactor is pyruvate. In terms of processing, is synthesized initially as an inactive proenzyme. Formation of the active enzyme involves a self-maturation process in which the active site pyruvoyl group is generated from an internal serine residue via an autocatalytic post-translational modification. Two non-identical subunits are generated from the proenzyme in this reaction, and the pyruvate is formed at the N-terminus of the alpha chain, which is derived from the carboxyl end of the proenzyme. The post-translation cleavage follows an unusual pathway, termed non-hydrolytic serinolysis, in which the side chain hydroxyl group of the serine supplies its oxygen atom to form the C-terminus of the beta chain, while the remainder of the serine residue undergoes an oxidative deamination to produce ammonia and the pyruvoyl group blocking the N-terminus of the alpha chain.

It catalyses the reaction S-adenosyl-L-methionine + H(+) = S-adenosyl 3-(methylsulfanyl)propylamine + CO2. The protein operates within amine and polyamine biosynthesis; S-adenosylmethioninamine biosynthesis; S-adenosylmethioninamine from S-adenosyl-L-methionine: step 1/1. Functionally, catalyzes the decarboxylation of S-adenosylmethionine to S-adenosylmethioninamine (dcAdoMet), the propylamine donor required for the synthesis of the polyamines spermine and spermidine from the diamine putrescine. The chain is S-adenosylmethionine decarboxylase proenzyme from Alkaliphilus metalliredigens (strain QYMF).